Reading from the N-terminus, the 493-residue chain is Xaa-Pro dipeptidase (493 aa).

At A2 the chain carries N-acetylalanine. S167 carries the phosphoserine modification. Residue H255 participates in a dipeptide binding. Positions 276, 287, and 370 each coordinate Mn(2+). Residue D287 coordinates a dipeptide. Residues H377 and R398 each coordinate a dipeptide. Residues E412 and E452 each coordinate Mn(2+).

It belongs to the peptidase M24B family. Eukaryotic-type prolidase subfamily. In terms of assembly, homodimer. It depends on Mn(2+) as a cofactor.

It catalyses the reaction Xaa-L-Pro dipeptide + H2O = an L-alpha-amino acid + L-proline. Functionally, dipeptidase that catalyzes the hydrolysis of dipeptides with a prolyl (Xaa-Pro) or hydroxyprolyl residue in the C-terminal position. The preferred dipeptide substrate is Gly-Pro, but other Xaa-Pro dipeptides, such as Ala-Pro, Met-Pro, Phe-Pro, Val-Pro and Leu-Pro, can be cleaved. Plays an important role in collagen metabolism because the high level of iminoacids in collagen. This Pongo abelii (Sumatran orangutan) protein is Xaa-Pro dipeptidase (PEPD).